A 451-amino-acid polypeptide reads, in one-letter code: Phosphoglucosamine mutase (451 aa).

Ser-102 functions as the Phosphoserine intermediate in the catalytic mechanism. Mg(2+) is bound by residues Ser-102, Asp-242, Asp-244, and Asp-246. The residue at position 102 (Ser-102) is a Phosphoserine.

This sequence belongs to the phosphohexose mutase family. The cofactor is Mg(2+). In terms of processing, activated by phosphorylation.

The enzyme catalyses alpha-D-glucosamine 1-phosphate = D-glucosamine 6-phosphate. Its function is as follows. Catalyzes the conversion of glucosamine-6-phosphate to glucosamine-1-phosphate. The sequence is that of Phosphoglucosamine mutase from Staphylococcus aureus (strain USA300).